We begin with the raw amino-acid sequence, 257 residues long: ADP-dependent (S)-NAD(P)H-hydrate dehydratase (257 aa).

One can recognise a YjeF C-terminal domain in the interval 1–257 (MGRLQRTLSN…VIERIPDTIR (257 aa)). Residue Gly200 participates in AMP binding. Asp201 serves as a coordination point for (6S)-NADPHX.

It belongs to the NnrD/CARKD family. As to quaternary structure, homotetramer. Mg(2+) serves as cofactor.

It catalyses the reaction (6S)-NADHX + ADP = AMP + phosphate + NADH + H(+). The enzyme catalyses (6S)-NADPHX + ADP = AMP + phosphate + NADPH + H(+). Its function is as follows. Catalyzes the dehydration of the S-form of NAD(P)HX at the expense of ADP, which is converted to AMP. Together with NAD(P)HX epimerase, which catalyzes the epimerization of the S- and R-forms, the enzyme allows the repair of both epimers of NAD(P)HX, a damaged form of NAD(P)H that is a result of enzymatic or heat-dependent hydration. The sequence is that of ADP-dependent (S)-NAD(P)H-hydrate dehydratase from Haloterrigena turkmenica (strain ATCC 51198 / DSM 5511 / JCM 9101 / NCIMB 13204 / VKM B-1734 / 4k) (Halococcus turkmenicus).